A 316-amino-acid polypeptide reads, in one-letter code: ADDLTTLRNGTLDRGITPDCTFNEKDIELHVYSRDKRNGIILKKEILKNYDLFQKSQISHQIAILIHGFLSTGNNENFDAMAKALIEIDNFLVISVDWKKGACNAFASTNDVLGYSQAVGNTRHVGKYVADFTKLLVEQYKVPMSNIRLIGHSLGAHTSGFAGKEVQRLKLGKYKEIIGLDPAGPSFLTSKCPDRLCETDAEYVQAIHTSAILGVYYNVGSVDFYVNYGKSQPGCSEPSCSHTKAVKYLTECIKRECCLIGTPWKSYFSTPKSISQCKRDTCVCVGLNAQSYPAKGSFYVPVEKDAPYCHNEGIKL.

An N-terminal signal peptide occupies residues 1–4; sequence ADDL. Residues 5–14 constitute a propeptide that is removed on maturation; it reads TTLRNGTLDR. The cysteines at positions 20 and 103 are disulfide-linked. Ser153 serves as the catalytic Nucleophile. Residue Asp181 is the Charge relay system of the active site. Intrachain disulfides connect Cys192–Cys197 and Cys235–Cys240. His242 serves as the catalytic Charge relay system. Intrachain disulfides connect Cys257/Cys284, Cys258/Cys309, and Cys277/Cys282.

It belongs to the AB hydrolase superfamily. Lipase family. Expressed by the venom gland.

It is found in the secreted. It catalyses the reaction a 1,2-diacyl-sn-glycero-3-phosphocholine + H2O = a 2-acyl-sn-glycero-3-phosphocholine + a fatty acid + H(+). In terms of biological role, catalyzes the hydrolysis of phosphatidylcholine with phospholipase A1 activity. May act as an allergen and induce hemolytic activity. The polypeptide is Phospholipase A1 4 (Polistes dominula (European paper wasp)).